We begin with the raw amino-acid sequence, 306 residues long: UDP-N-acetylenolpyruvoylglucosamine reductase (306 aa).

Positions Val-34 to Ser-198 constitute an FAD-binding PCMH-type domain. Arg-177 is an active-site residue. Residue Ser-227 is the Proton donor of the active site. Residue Glu-297 is part of the active site.

The protein belongs to the MurB family. Requires FAD as cofactor.

It is found in the cytoplasm. It carries out the reaction UDP-N-acetyl-alpha-D-muramate + NADP(+) = UDP-N-acetyl-3-O-(1-carboxyvinyl)-alpha-D-glucosamine + NADPH + H(+). The protein operates within cell wall biogenesis; peptidoglycan biosynthesis. Its function is as follows. Cell wall formation. This Clostridium botulinum (strain Langeland / NCTC 10281 / Type F) protein is UDP-N-acetylenolpyruvoylglucosamine reductase.